The sequence spans 226 residues: Ribonuclease 3 (226 aa).

The RNase III domain maps to 6–128 (INRLQRKLGY…LIGGVFLDSD (123 aa)). Glutamate 41 provides a ligand contact to Mg(2+). Aspartate 45 is a catalytic residue. Residues aspartate 114 and glutamate 117 each contribute to the Mg(2+) site. Residue glutamate 117 is part of the active site. Residues 155–225 (DPKTRLQEYL…AEQALKQLEL (71 aa)) form the DRBM domain.

It belongs to the ribonuclease III family. Homodimer. It depends on Mg(2+) as a cofactor.

The protein localises to the cytoplasm. The enzyme catalyses Endonucleolytic cleavage to 5'-phosphomonoester.. Its function is as follows. Digests double-stranded RNA. Involved in the processing of primary rRNA transcript to yield the immediate precursors to the large and small rRNAs (23S and 16S). Processes some mRNAs, and tRNAs when they are encoded in the rRNA operon. Processes pre-crRNA and tracrRNA of type II CRISPR loci if present in the organism. In Yersinia pseudotuberculosis serotype O:1b (strain IP 31758), this protein is Ribonuclease 3.